The following is a 146-amino-acid chain: Large ribosomal subunit protein eL28 (146 aa).

Residues 123–146 (VRAARKERSSKITFQRKAVRPKRH) are disordered.

Belongs to the eukaryotic ribosomal protein eL28 family.

In Trypanosoma cruzi, this protein is Large ribosomal subunit protein eL28.